The chain runs to 422 residues: MNVSAVADLSPEARAALFERDAGIEDARESVRDIIGRVREEGDVALRSYAKEFDDVDIGTLAVTDEAERAYDDLDDDLRDAIETAAENIRTFHERQVPDDWREQFDGRELGRRYRPLERVGVYAPGGTAAYPSSVLMGVIPAVVAGVDHVAVATPPAEELPAATLAAAHVAGADAVYQVGGAQAIAALAYGTESVSAVQKVVGPGNRWVTAAKAEVRGDVEIDFLAGPSELLVVCDDTADPELIAADMVAQAEHDPNASVVCVSDDEATAEAVADACERQATARERTEAIESALENDASAVLCARSMSEAVLFAEEYAAEHLSIVAADEEALLDRIDSAGSVFLGGFSPVAVGDYASGTNHVLPTGGLAKVAGGLSVDHFVRSTTVQKLDEDALSSLRETVTTLARAEGLEAHAESVDKRFD.

NAD(+)-binding residues include tyrosine 123, glutamine 183, and asparagine 206. Residues serine 229, glutamine 251, and histidine 254 each coordinate substrate. The Zn(2+) site is built by glutamine 251 and histidine 254. Residues glutamate 320 and histidine 321 each act as proton acceptor in the active site. Residues histidine 321, aspartate 354, glutamate 408, and histidine 413 each contribute to the substrate site. Aspartate 354 lines the Zn(2+) pocket. A Zn(2+)-binding site is contributed by histidine 413.

Belongs to the histidinol dehydrogenase family. Zn(2+) is required as a cofactor.

It catalyses the reaction L-histidinol + 2 NAD(+) + H2O = L-histidine + 2 NADH + 3 H(+). It functions in the pathway amino-acid biosynthesis; L-histidine biosynthesis; L-histidine from 5-phospho-alpha-D-ribose 1-diphosphate: step 9/9. In terms of biological role, catalyzes the sequential NAD-dependent oxidations of L-histidinol to L-histidinaldehyde and then to L-histidine. This is Histidinol dehydrogenase from Natronomonas pharaonis (strain ATCC 35678 / DSM 2160 / CIP 103997 / JCM 8858 / NBRC 14720 / NCIMB 2260 / Gabara) (Halobacterium pharaonis).